A 160-amino-acid chain; its full sequence is Photosystem II extrinsic protein V (160 aa).

The N-terminal stretch at 1–25 (MKRFFLVAIASVLFFFNTMVGSANA) is a signal peptide. Residues Cys-62, Cys-65, His-66, and His-117 each coordinate heme c.

Belongs to the cytochrome c family. PsbV subfamily. As to quaternary structure, PSII is composed of 1 copy each of membrane proteins PsbA, PsbB, PsbC, PsbD, PsbE, PsbF, PsbH, PsbI, PsbJ, PsbK, PsbL, PsbM, PsbT, PsbX, PsbY, PsbZ, Psb30/Ycf12, peripheral proteins PsbO, CyanoQ (PsbQ), PsbU, PsbV and a large number of cofactors. It forms dimeric complexes. The cyanobacterial oxygen-evolving complex is composed of PsbO, CyanoQ (PsbQ), PsbV and PsbU. It depends on heme c as a cofactor.

The protein localises to the cellular thylakoid membrane. One of the extrinsic, lumenal subunits of photosystem II (PSII). PSII is a light-driven water plastoquinone oxidoreductase, using light energy to abstract electrons from H(2)O, generating a proton gradient subsequently used for ATP formation. The extrinsic proteins stabilize the structure of photosystem II oxygen-evolving complex (OEC), the ion environment of oxygen evolution and protect the OEC against heat-induced inactivation. Low-potential cytochrome c that plays a role in the OEC of PSII, required for normal function or stabilization of PSII. This is Photosystem II extrinsic protein V from Synechocystis sp. (strain ATCC 27184 / PCC 6803 / Kazusa).